We begin with the raw amino-acid sequence, 397 residues long: Cytochrome b (397 aa).

Helical transmembrane passes span 38-58 (FGSL…FLAM), 82-104 (WLLR…LHIF), 119-139 (VWCL…IGYV), and 185-205 (FFSL…LHLA). Positions 88 and 102 each coordinate heme b. Residues histidine 189 and histidine 203 each coordinate heme b. Histidine 208 serves as a coordination point for a ubiquinone. 4 consecutive transmembrane segments (helical) span residues 231–251 (FYVK…IWIF), 295–315 (AGGV…PFFK), 327–347 (IYQG…WIGC), and 354–373 (FVTI…AITP).

This sequence belongs to the cytochrome b family. The main subunits of complex b-c1 are: cytochrome b, cytochrome c1 and the Rieske protein. Requires heme b as cofactor.

The protein localises to the mitochondrion inner membrane. Its function is as follows. Component of the ubiquinol-cytochrome c reductase complex (complex III or cytochrome b-c1 complex) that is part of the mitochondrial respiratory chain. The b-c1 complex mediates electron transfer from ubiquinol to cytochrome c. Contributes to the generation of a proton gradient across the mitochondrial membrane that is then used for ATP synthesis. The protein is Cytochrome b (MT-CYB) of Oryza sativa subsp. indica (Rice).